The following is a 242-amino-acid chain: Cytochrome c oxidase subunit 2 (242 aa).

The Mitochondrial intermembrane segment spans residues Asp-7 to Ile-33. The helical transmembrane segment at Val-34–Asn-55 threads the bilayer. The Mitochondrial matrix segment spans residues Phe-56–Glu-73. The chain crosses the membrane as a helical span at residues Ile-74–Cys-98. Over Asp-99–Gln-242 the chain is Mitochondrial intermembrane. His-177, Cys-212, Glu-214, Cys-216, His-220, and Met-223 together coordinate Cu cation. Position 214 (Glu-214) interacts with Mg(2+).

Belongs to the cytochrome c oxidase subunit 2 family. In terms of assembly, component of the cytochrome c oxidase (complex IV, CIV), a multisubunit enzyme composed of a catalytic core of 3 subunits and several supernumerary subunits. The complex exists as a monomer or a dimer and forms supercomplexes (SCs) in the inner mitochondrial membrane with ubiquinol-cytochrome c oxidoreductase (cytochrome b-c1 complex, complex III, CIII). Requires Cu cation as cofactor. The signal sequence of COX2 is processed by IMP1.

The protein localises to the mitochondrion inner membrane. It catalyses the reaction 4 Fe(II)-[cytochrome c] + O2 + 8 H(+)(in) = 4 Fe(III)-[cytochrome c] + 2 H2O + 4 H(+)(out). In terms of biological role, component of the cytochrome c oxidase, the last enzyme in the mitochondrial electron transport chain which drives oxidative phosphorylation. The respiratory chain contains 3 multisubunit complexes succinate dehydrogenase (complex II, CII), ubiquinol-cytochrome c oxidoreductase (cytochrome b-c1 complex, complex III, CIII) and cytochrome c oxidase (complex IV, CIV), that cooperate to transfer electrons derived from NADH and succinate to molecular oxygen, creating an electrochemical gradient over the inner membrane that drives transmembrane transport and the ATP synthase. Cytochrome c oxidase is the component of the respiratory chain that catalyzes the reduction of oxygen to water. Electrons originating from reduced cytochrome c in the intermembrane space (IMS) are transferred via the dinuclear copper A center (CU(A)) of subunit 2 and heme A of subunit 1 to the active site in subunit 1, a binuclear center (BNC) formed by heme A3 and copper B (CU(B)). The BNC reduces molecular oxygen to 2 water molecules using 4 electrons from cytochrome c in the IMS and 4 protons from the mitochondrial matrix. The sequence is that of Cytochrome c oxidase subunit 2 (COX2) from Yarrowia lipolytica (strain CLIB 122 / E 150) (Yeast).